The following is a 1178-amino-acid chain: Tricalbin-2 (1178 aa).

Positions 1 to 17 (MSPNSSKTRTDQISSMP) are enriched in polar residues. The tract at residues 1 to 27 (MSPNSSKTRTDQISSMPGINEATKVES) is disordered. The Cytoplasmic portion of the chain corresponds to 1-98 (MSPNSSKTRT…NLLPDKFYGD (98 aa)). The helical transmembrane segment at 99–119 (WYHEVAILIIAGLCSFVLGYF) threads the bilayer. A topological domain (extracellular) is located at residue K120. A helical transmembrane segment spans residues 121-141 (FSLASVLIVMLTTGMLYRTSS). Topologically, residues 142–1178 (KKYRESLRDL…TGDKKSEEKQ (1037 aa)) are cytoplasmic. An SMP-LTD domain is found at 164–367 (DYESVEWLNT…PPFSLQLNIP (204 aa)). C2 domains follow at residues 358–481 (PPFS…EKVH), 504–628 (PKKL…LKVT), and 632–749 (RPVD…DKYT). Residues 784–821 (LSLEEAKEVDEINEKKDKLEKQKSTLDDKNISKEEKER) adopt a coiled-coil conformation. The C2 4 domain maps to 962–1086 (QVSWFPVTAT…DPESDTTFNI (125 aa)). At S991 the chain carries Phosphoserine.

The protein belongs to the tricalbin family. In terms of assembly, interacts with TCB1 and TCB3 via its C-terminal domain.

The protein resides in the cell membrane. It is found in the endoplasmic reticulum membrane. Its function is as follows. May play a role in membrane trafficking. This Saccharomyces cerevisiae (strain ATCC 204508 / S288c) (Baker's yeast) protein is Tricalbin-2 (TCB2).